Reading from the N-terminus, the 212-residue chain is ATP synthase F(0) complex subunit a (212 aa).

The next 6 membrane-spanning stretches (helical) occupy residues 3-23 (MMGI…IYTS), 58-78 (WAAM…LGLL), 87-107 (QLSM…LTGL), 128-148 (IPLL…ALGV), 169-189 (FVLL…LVLL), and 192-212 (LEIA…TLYL).

The protein belongs to the ATPase A chain family. As to quaternary structure, component of the ATP synthase complex composed at least of ATP5F1A/subunit alpha, ATP5F1B/subunit beta, ATP5MC1/subunit c (homooctomer), MT-ATP6/subunit a, MT-ATP8/subunit 8, ATP5ME/subunit e, ATP5MF/subunit f, ATP5MG/subunit g, ATP5MK/subunit k, ATP5MJ/subunit j, ATP5F1C/subunit gamma, ATP5F1D/subunit delta, ATP5F1E/subunit epsilon, ATP5PF/subunit F6, ATP5PB/subunit b, ATP5PD/subunit d, ATP5PO/subunit OSCP. ATP synthase complex consists of a soluble F(1) head domain (subunits alpha(3) and beta(3)) - the catalytic core - and a membrane F(0) domain - the membrane proton channel (subunits c, a, 8, e, f, g, k and j). These two domains are linked by a central stalk (subunits gamma, delta, and epsilon) rotating inside the F1 region and a stationary peripheral stalk (subunits F6, b, d, and OSCP). Interacts with DNAJC30; interaction is direct.

The protein localises to the mitochondrion inner membrane. The enzyme catalyses H(+)(in) = H(+)(out). Its function is as follows. Subunit a, of the mitochondrial membrane ATP synthase complex (F(1)F(0) ATP synthase or Complex V) that produces ATP from ADP in the presence of a proton gradient across the membrane which is generated by electron transport complexes of the respiratory chain. ATP synthase complex consist of a soluble F(1) head domain - the catalytic core - and a membrane F(1) domain - the membrane proton channel. These two domains are linked by a central stalk rotating inside the F(1) region and a stationary peripheral stalk. During catalysis, ATP synthesis in the catalytic domain of F(1) is coupled via a rotary mechanism of the central stalk subunits to proton translocation. With the subunit c (ATP5MC1), forms the proton-conducting channel in the F(0) domain, that contains two crucial half-channels (inlet and outlet) that facilitate proton movement from the mitochondrial intermembrane space (IMS) into the matrix. Protons are taken up via the inlet half-channel and released through the outlet half-channel, following a Grotthuss mechanism. The protein is ATP synthase F(0) complex subunit a of Tropidurus hispidus (Peters' lava lizard).